The primary structure comprises 403 residues: Synaptotagmin-7 (403 aa).

Residues 1–16 (MYRDPEAASPGAPSRD) are Vesicular-facing. The helical transmembrane segment at 17–37 (VLLVSAIITVSLSVTVVLCGL) threads the bilayer. Residues 38–403 (CHWCQRKLGK…PVAQWHQLKA (366 aa)) are Cytoplasmic-facing. Serine 52 bears the Phosphoserine mark. Positions 53-106 (LETVGTPDSGRGRSEKKAIKLPAGGKAVNTAPVPGQTPHDESDRRTEPRSSVSD) are disordered. A Phosphothreonine modification is found at threonine 58. Serine 61 bears the Phosphoserine mark. Basic and acidic residues predominate over residues 90-100 (PHDESDRRTEP). Residues serine 119 and serine 122 each carry the phosphoserine modification. 2 consecutive C2 domains span residues 135–255 (NLGR…TFWK) and 266–399 (SRGE…AQWH). Ca(2+) contacts are provided by aspartate 166, aspartate 172, aspartate 225, aspartate 227, serine 230, aspartate 233, aspartate 297, aspartate 303, aspartate 357, aspartate 359, serine 362, and aspartate 365.

It belongs to the synaptotagmin family. As to quaternary structure, homodimer. Can also form heterodimers with SYT6, SYT9 and SYT10. Interacts with calmodulin (CALM1, CALM2 or CALM3). Interacts with CD63; required for localization to lysosomes. Interacts with APP. Ca(2+) is required as a cofactor. Post-translationally, palmitoylated at its vesicular N-terminus; palmitoylation is required for localization to lysosome and phagocytosis in macrophages. As to expression, expressed in a variety of adult and fetal tissues.

It localises to the cell membrane. The protein resides in the presynaptic cell membrane. Its subcellular location is the cytoplasmic vesicle. It is found in the secretory vesicle. The protein localises to the synaptic vesicle membrane. It localises to the lysosome membrane. The protein resides in the phagosome membrane. Its subcellular location is the peroxisome membrane. It is found in the secretory vesicle membrane. Functionally, ca(2+) sensor involved in Ca(2+)-dependent exocytosis of secretory and synaptic vesicles through Ca(2+) and phospholipid binding to the C2 domain. Ca(2+) induces binding of the C2-domains to phospholipid membranes and to assembled SNARE-complexes; both actions contribute to triggering exocytosis. SYT7 binds Ca(2+) with high affinity and slow kinetics compared to other synaptotagmins. Involved in Ca(2+)-triggered lysosomal exocytosis, a major component of the plasma membrane repair. Ca(2+)-regulated delivery of lysosomal membranes to the cell surface is also involved in the phagocytic uptake of particles by macrophages. Ca(2+)-triggered lysosomal exocytosis also plays a role in bone remodeling by regulating secretory pathways in osteoclasts and osteoblasts. In case of infection, involved in participates cell invasion by Trypanosoma cruzi via Ca(2+)-triggered lysosomal exocytosis. Involved in cholesterol transport from lysosome to peroxisome by promoting membrane contacts between lysosomes and peroxisomes: probably acts by promoting vesicle fusion by binding phosphatidylinositol-4,5-bisphosphate on peroxisomal membranes. Acts as a key mediator of synaptic facilitation, a process also named short-term synaptic potentiation: synaptic facilitation takes place at synapses with a low initial release probability and is caused by influx of Ca(2+) into the axon terminal after spike generation, increasing the release probability of neurotransmitters. Probably mediates synaptic facilitation by directly increasing the probability of release. May also contribute to synaptic facilitation by regulating synaptic vesicle replenishment, a process required to ensure that synaptic vesicles are ready for the arrival of the next action potential: SYT7 is required for synaptic vesicle replenishment by acting as a sensor for Ca(2+) and by forming a complex with calmodulin. Also acts as a regulator of Ca(2+)-dependent insulin and glucagon secretion in beta-cells. Triggers exocytosis by promoting fusion pore opening and fusion pore expansion in chromaffin cells. Also regulates the secretion of some non-synaptic secretory granules of specialized cells. In Homo sapiens (Human), this protein is Synaptotagmin-7.